A 315-amino-acid polypeptide reads, in one-letter code: WD repeat domain-containing protein 83 (315 aa).

WD repeat units lie at residues 23–62 (CSQG…LLRT), 65–104 (GHGY…VVRK), 107–146 (GHAG…PEPV), 151–188 (EARD…VSSD), 190–228 (VGSP…LLGE), 231–272 (GHKN…LALA), and 275–313 (VGSN…AEGG).

The protein belongs to the WD repeat MORG1 family. Interacts with EGLN3/PHD3. Interacts with ERK signaling proteins MAP2K1/MEK1, MAP2K2/MEK2, LAMTOR3, ARAF/Raf-1, MAPK1/ERK2 and MAPK3/ERK1. Identified in the spliceosome C complex. Interacts with PARD6B and CRB3. Interacts strongly with GTP-bound RRAGA but not with inactive GDP-bound. Interacts with p62/SQSTM1. Ubiquitous.

It localises to the cytoplasm. The protein resides in the lysosome. Its subcellular location is the nucleus. Its function is as follows. Molecular scaffold protein for various multimeric protein complexes. Acts as a module in the assembly of a multicomponent scaffold for the ERK pathway, linking ERK responses to specific agonists. At low concentrations it enhances ERK activation, whereas high concentrations lead to the inhibition of ERK activation. Also involved in response to hypoxia by acting as a negative regulator of HIF1A/HIF-1-alpha via its interaction with EGLN3/PHD3. May promote degradation of HIF1A. May act by recruiting signaling complexes to a specific upstream activator. May also be involved in pre-mRNA splicing. Participates in tight junction development by regulating apico-basal polarity, a key step in tissue development and organization. Mechanistically, regulates the translocation of PAR6-aPKC from the cytoplasm to the apical surface by acting as an adapter between PARD6B AND CRB3. Also acts as a negative regulator of mTORC1 under nutrient-rich conditions by binding to the active Rag GTPases to inhibit mTORC1 localization to the lysosome and phosphorylation of downstream targets. This facilitates constitutive basal autophagy during nutrient availability. The polypeptide is WD repeat domain-containing protein 83 (Wdr83) (Mus musculus (Mouse)).